The chain runs to 184 residues: Photosystem I assembly protein Ycf4 (184 aa).

2 helical membrane passes run 19–39 and 57–77; these read ISNL…VLVG and IIFF…LFIS.

The protein belongs to the Ycf4 family.

It localises to the plastid thylakoid membrane. In terms of biological role, seems to be required for the assembly of the photosystem I complex. The protein is Photosystem I assembly protein Ycf4 of Cuscuta reflexa (Southern Asian dodder).